The chain runs to 115 residues: NADH-ubiquinone oxidoreductase chain 3 (115 aa).

The next 3 membrane-spanning stretches (helical) occupy residues 4 to 24, 55 to 75, and 83 to 103; these read LTAL…AFWL, FFLV…LLPL, and YINI…LGLA.

It belongs to the complex I subunit 3 family. Core subunit of respiratory chain NADH dehydrogenase (Complex I) which is composed of 45 different subunits. Interacts with TMEM186. Interacts with TMEM242.

It localises to the mitochondrion inner membrane. It carries out the reaction a ubiquinone + NADH + 5 H(+)(in) = a ubiquinol + NAD(+) + 4 H(+)(out). Functionally, core subunit of the mitochondrial membrane respiratory chain NADH dehydrogenase (Complex I) which catalyzes electron transfer from NADH through the respiratory chain, using ubiquinone as an electron acceptor. Essential for the catalytic activity of complex I. In Peromyscus polionotus (Oldfield mouse), this protein is NADH-ubiquinone oxidoreductase chain 3.